We begin with the raw amino-acid sequence, 300 residues long: Protein MoxJ (300 aa).

Positions 1–25 (MSLVNGRRRTAASVVALTAALTALA) are cleaved as a signal peptide.

The protein resides in the periplasm. In terms of biological role, may be involved in the assemblage of active methanol dehydrogenase and/or its cofactor PQQ in the periplasm. This is Protein MoxJ (moxJ) from Methylorubrum extorquens (strain ATCC 14718 / DSM 1338 / JCM 2805 / NCIMB 9133 / AM1) (Methylobacterium extorquens).